A 601-amino-acid chain; its full sequence is ATP-dependent rRNA helicase SPB4 (601 aa).

Positions 14 to 42 (LAWSQASLQPWIHDAIDSLGFRSMTPVQA) match the Q motif motif. The Helicase ATP-binding domain maps to 45 to 228 (IPLFCGNKDV…RTGMSNPVKI (184 aa)). Residue 58 to 65 (AVTGSGKT) participates in ATP binding. The DEAD box motif lies at 176–179 (DEAD). The Helicase C-terminal domain occupies 257–419 (VLINMLSTLQ…AYKAFSKNLR (163 aa)). The stretch at 507–575 (KEKIRLETME…QIMNESSDEE (69 aa)) forms a coiled coil. Positions 532 to 554 (LKVKNEAWSSKNEKKEGKQERRE) are enriched in basic and acidic residues. A disordered region spans residues 532 to 576 (LKVKNEAWSSKNEKKEGKQERREKMKRKREAIEKQIMNESSDEET).

This sequence belongs to the DEAD box helicase family. DDX55/SPB4 subfamily. As to quaternary structure, component of pre-60S ribosomal complexes.

Its subcellular location is the nucleus. The protein resides in the nucleolus. The enzyme catalyses ATP + H2O = ADP + phosphate + H(+). Its function is as follows. ATP-binding RNA helicase involved in the biogenesis of 60S ribosomal subunits. Binds 90S pre-ribosomal particles and dissociates from pre-60S ribosomal particles after processing of 27SB pre-rRNA. Required for the normal formation of 18S rRNA through the processing of pre-rRNAs at sites A0, A1 and A2, and the normal formation of 25S and 5.8S rRNAs through the processing of pre-rRNAs at sites C1 and C2. This Meyerozyma guilliermondii (strain ATCC 6260 / CBS 566 / DSM 6381 / JCM 1539 / NBRC 10279 / NRRL Y-324) (Yeast) protein is ATP-dependent rRNA helicase SPB4.